A 182-amino-acid chain; its full sequence is MQDLSGFSVPKGFRGGNAIKVQLWWAVQATIFAWSPQVLYRWRAFLLRLFGAKIGKNVVIRPSVKITYPWKLTLGDYAWVGDDVNLYTLGEITIGAHSVISQKSYLCTGSHDHASQHFTINATPIVIGEKCWLATDVFVAPGVTIGDGTVVGARSSVFKSLPANVVCRGNPAVVIRERVETE.

The protein belongs to the transferase hexapeptide repeat family.

It participates in slime biogenesis; slime polysaccharide biosynthesis. This is Putative colanic acid biosynthesis acetyltransferase WcaF (wcaF) from Shigella flexneri.